The sequence spans 372 residues: Phospho-N-acetylmuramoyl-pentapeptide-transferase (372 aa).

The next 10 helical transmembrane spans lie at 25 to 45, 73 to 93, 98 to 118, 134 to 154, 176 to 196, 211 to 231, 251 to 271, 275 to 295, 300 to 320, and 349 to 369; these read RSLL…PIMI, TMGG…WADL, VWIV…DDWI, FFWT…IATQ, SIPL…YLVI, GLAI…AYLS, LVVI…YNAH, VFMG…IAVM, IVFA…FLQI, and QVVI…LMTL.

Belongs to the glycosyltransferase 4 family. MraY subfamily. Mg(2+) serves as cofactor.

It localises to the cell inner membrane. The catalysed reaction is UDP-N-acetyl-alpha-D-muramoyl-L-alanyl-gamma-D-glutamyl-meso-2,6-diaminopimeloyl-D-alanyl-D-alanine + di-trans,octa-cis-undecaprenyl phosphate = di-trans,octa-cis-undecaprenyl diphospho-N-acetyl-alpha-D-muramoyl-L-alanyl-D-glutamyl-meso-2,6-diaminopimeloyl-D-alanyl-D-alanine + UMP. It participates in cell wall biogenesis; peptidoglycan biosynthesis. Catalyzes the initial step of the lipid cycle reactions in the biosynthesis of the cell wall peptidoglycan: transfers peptidoglycan precursor phospho-MurNAc-pentapeptide from UDP-MurNAc-pentapeptide onto the lipid carrier undecaprenyl phosphate, yielding undecaprenyl-pyrophosphoryl-MurNAc-pentapeptide, known as lipid I. This is Phospho-N-acetylmuramoyl-pentapeptide-transferase from Acinetobacter baumannii (strain AB0057).